Here is a 786-residue protein sequence, read N- to C-terminus: LPS-assembly protein LptD (786 aa).

Positions 1-39 (MPPKPLFPNVFPGDGAPRKRRLALALLAVPGLVPAVSYA) are cleaved as a signal peptide. The segment at 767–786 (PGYTPLPPPPPPMSRFSNYE) is disordered. Pro residues predominate over residues 770-779 (TPLPPPPPPM).

This sequence belongs to the LptD family. As to quaternary structure, component of the lipopolysaccharide transport and assembly complex. Interacts with LptE and LptA.

It is found in the cell outer membrane. Together with LptE, is involved in the assembly of lipopolysaccharide (LPS) at the surface of the outer membrane. The sequence is that of LPS-assembly protein LptD from Burkholderia cenocepacia (strain HI2424).